The chain runs to 66 residues: Small ribosomal subunit protein bS21 (66 aa).

The protein belongs to the bacterial ribosomal protein bS21 family.

The polypeptide is Small ribosomal subunit protein bS21 (Rickettsia typhi (strain ATCC VR-144 / Wilmington)).